Reading from the N-terminus, the 376-residue chain is GDSL esterase/lipase At5g55050 (376 aa).

The signal sequence occupies residues 1-29 (MPTNNTPFLTIFLLFLGLLRFDSFPGLEA). The active-site Nucleophile is the serine 46. N-linked (GlcNAc...) asparagine glycosylation is found at asparagine 134 and asparagine 245. Active-site residues include aspartate 340 and histidine 344.

Belongs to the 'GDSL' lipolytic enzyme family.

Its subcellular location is the secreted. This chain is GDSL esterase/lipase At5g55050, found in Arabidopsis thaliana (Mouse-ear cress).